The following is a 324-amino-acid chain: Protein FAM228B (324 aa).

This sequence belongs to the FAM228 family.

In Homo sapiens (Human), this protein is Protein FAM228B (FAM228B).